Consider the following 306-residue polypeptide: Non-specific ribonucleoside hydrolase RihC (306 aa).

His235 is a catalytic residue.

The protein belongs to the IUNH family. RihC subfamily.

Its function is as follows. Hydrolyzes both purine and pyrimidine ribonucleosides with a broad-substrate specificity. The polypeptide is Non-specific ribonucleoside hydrolase RihC (Salmonella schwarzengrund (strain CVM19633)).